Consider the following 440-residue polypeptide: Coenzyme A disulfide reductase (440 aa).

8 to 33 (GAVAGGATCASQIRRLDKDSEITIFE) contacts FAD. Substrate contacts are provided by threonine 15, glutamine 19, arginine 22, serine 39, and asparagine 42. Cysteine 43 (nucleophile) is an active-site residue. The active-site Redox-active is the cysteine 43. Lysine 71 serves as a coordination point for substrate. NADP(+) is bound at residue 151-166 (ALVVGAGYISLEVLEN). Residue 267 to 277 (TNIPNIYALGD) participates in FAD binding. Position 299 (histidine 299) interacts with substrate. Position 419 (tyrosine 419) interacts with FAD. Lysine 427 contacts substrate.

Belongs to the class-III pyridine nucleotide-disulfide oxidoreductase family. As to quaternary structure, homodimer. Requires FAD as cofactor.

The enzyme catalyses NADP(+) + 2 CoA = CoA-disulfide + NADPH + H(+). In terms of biological role, catalyzes specifically the NADPH-dependent reduction of coenzyme A disulfide. This is Coenzyme A disulfide reductase from Staphylococcus haemolyticus (strain JCSC1435).